A 1154-amino-acid chain; its full sequence is Kinesin-like protein KIN-7E, chloroplastic (1154 aa).

Composition is skewed to low complexity over residues 1–14 and 29–109; these read MSSS…SISP and VAAA…PPVA. The N-terminal 21 residues, 1–21, are a transit peptide targeting the chloroplast; sequence MSSSSRPGRASISPFRSRRTS. The tract at residues 1–109 is disordered; the sequence is MSSSSRPGRA…RAAGRAPPVA (109 aa). The 319-residue stretch at 119–437 folds into the Kinesin motor domain; the sequence is NIMVTVRFRP…LKFAHRSKHI (319 aa). 199–206 provides a ligand contact to ATP; sequence GVTSSGKT. Residues 441–523 adopt a coiled-coil conformation; the sequence is ASQNKIIDEK…AALMGRIQRL (83 aa). Residues 620–674 are disordered; sequence LSTSVDSESTASGSPSFSRSSQQKHPLLDLKDGRRKSMTRKGDDPALTDSFPGRT. Residues 628 to 640 are compositionally biased toward low complexity; sequence STASGSPSFSRSS. Coiled-coil stretches lie at residues 734 to 761 and 801 to 845; these read DSQI…LEQR and ADNR…DNVA. The disordered stretch occupies residues 838–885; that stretch reads AKNEDNVASMQSSEPSSTSSNPRDLANEVASHSKMPSRTTEDHTESPL. Positions 846–857 are enriched in low complexity; that stretch reads SMQSSEPSSTSS. Residues 894–967 adopt a coiled-coil conformation; that stretch reads AEIENLKLDK…DLAAAKDQTR (74 aa).

This sequence belongs to the TRAFAC class myosin-kinesin ATPase superfamily. Kinesin family. KIN-7 subfamily.

The protein localises to the plastid. Its subcellular location is the chloroplast. The protein is Kinesin-like protein KIN-7E, chloroplastic of Oryza sativa subsp. japonica (Rice).